Reading from the N-terminus, the 156-residue chain is Small ribosomal subunit protein uS7 (156 aa).

Belongs to the universal ribosomal protein uS7 family. Part of the 30S ribosomal subunit. Contacts proteins S9 and S11.

One of the primary rRNA binding proteins, it binds directly to 16S rRNA where it nucleates assembly of the head domain of the 30S subunit. Is located at the subunit interface close to the decoding center, probably blocks exit of the E-site tRNA. This chain is Small ribosomal subunit protein uS7, found in Gemmatimonas aurantiaca (strain DSM 14586 / JCM 11422 / NBRC 100505 / T-27).